The following is a 405-amino-acid chain: Low-salt glycan biosynthesis sulfotransferase Agl7 (405 aa).

Ca(2+) contacts are provided by aspartate 24, aspartate 201, and histidine 202.

This sequence belongs to the sulfatase family. It depends on Ca(2+) as a cofactor.

The protein operates within protein modification; protein glycosylation. It participates in cell surface structure biogenesis; S-layer biogenesis. Its function is as follows. Involved in N-glycan biosynthetic pathway that takes place under low-salt conditions (1.75 M instead of 3.4 M). Participates in the formation of the tetrasaccharide present at 'Asn-532' of S-layer glycoprotein Csg, consisting of a sulfated hexose, 2 hexoses and rhamnose. Mediates sulfation of sugar 1 in the tetrasaccharide. This is Low-salt glycan biosynthesis sulfotransferase Agl7 from Haloferax volcanii (strain ATCC 29605 / DSM 3757 / JCM 8879 / NBRC 14742 / NCIMB 2012 / VKM B-1768 / DS2) (Halobacterium volcanii).